The chain runs to 144 residues: MAKKVVGYIKLQIPAGKANPSPPVGPALGQRGLNIMQFCKEFNAKTQQLEPGMPIPVVITAYADRTFSFITKTPPNTYFLLKAAKISKGSQTVGKSAAVGSVTTAQLREIAETKFKDMNANDIDGAVRMLAGSAKSMGLNVVEG.

Belongs to the universal ribosomal protein uL11 family. Part of the ribosomal stalk of the 50S ribosomal subunit. Interacts with L10 and the large rRNA to form the base of the stalk. L10 forms an elongated spine to which L12 dimers bind in a sequential fashion forming a multimeric L10(L12)X complex. One or more lysine residues are methylated.

Forms part of the ribosomal stalk which helps the ribosome interact with GTP-bound translation factors. This Gluconobacter oxydans (strain 621H) (Gluconobacter suboxydans) protein is Large ribosomal subunit protein uL11.